The following is a 237-amino-acid chain: 1-(5-phosphoribosyl)-5-[(5-phosphoribosylamino)methylideneamino] imidazole-4-carboxamide isomerase (237 aa).

The Proton acceptor role is filled by aspartate 8. Aspartate 130 serves as the catalytic Proton donor.

This sequence belongs to the HisA/HisF family.

It is found in the cytoplasm. It carries out the reaction 1-(5-phospho-beta-D-ribosyl)-5-[(5-phospho-beta-D-ribosylamino)methylideneamino]imidazole-4-carboxamide = 5-[(5-phospho-1-deoxy-D-ribulos-1-ylimino)methylamino]-1-(5-phospho-beta-D-ribosyl)imidazole-4-carboxamide. It functions in the pathway amino-acid biosynthesis; L-histidine biosynthesis; L-histidine from 5-phospho-alpha-D-ribose 1-diphosphate: step 4/9. This is 1-(5-phosphoribosyl)-5-[(5-phosphoribosylamino)methylideneamino] imidazole-4-carboxamide isomerase from Halothermothrix orenii (strain H 168 / OCM 544 / DSM 9562).